Consider the following 382-residue polypeptide: Sphingoid long-chain base transporter RSB1 (382 aa).

The Extracellular segment spans residues 1 to 34 (MSNATNNTLGSLLPQLEAAANSNSLYGGMVPNLR). Asparagine 3 and asparagine 6 each carry an N-linked (GlcNAc...) asparagine glycan. A helical membrane pass occupies residues 35 to 55 (FNITMIVIWGILLTIHVVQLL). Over 56–57 (MR) the chain is Cytoplasmic. The chain crosses the membrane as a helical span at residues 58-78 (QYWFSIAFICTGILEVLGYIG). Residues 79–90 (RTWSHSNVADMD) are Extracellular-facing. The chain crosses the membrane as a helical span at residues 91 to 111 (AFLLNMICLTIAPVFTMGGIY). At 112 to 135 (YQLAKLIEVYGHRFSLLPSPMAYS) the chain is on the cytoplasmic side. The helical transmembrane segment at 136-156 (FIFICSDIVSLVVQAVGGGLC) threads the bilayer. Topologically, residues 157–171 (GVAVTDGTSTTTGNH) are extracellular. The helical transmembrane segment at 172 to 192 (VFIAGLAIQVASMAIFLMLWF) threads the bilayer. Over 193 to 241 (HFLFRIYISVRWEHINSRPISLSLLKISQTEVDYLYREKFHFLRLEPKR) the chain is Cytoplasmic. Residues 242–262 (WVFHYFNLAMTVAVLTIFTRC) traverse the membrane as a helical segment. Residues 263 to 281 (CYRLAELVVGWDGYLITHE) lie on the Extracellular side of the membrane. The helical transmembrane segment at 282–302 (WYFIILDALMMAIATVTLTIF) threads the bilayer. Residues 303-382 (HPGFAFKGRS…LFSSKKKAKL (80 aa)) lie on the Cytoplasmic side of the membrane.

It belongs to the lipid-translocating exporter (LTE) (TC 9.A.26.1) family.

Its subcellular location is the cell membrane. In terms of biological role, catalyzes the ATP-dependent translocation of sphingoid long-chain bases (LCBs) from the cytoplasmic site toward the extracytoplasmic side of the membrane (flip-flop). Involved in the establishment of the functional lipid asymmetry of the plasma membrane. Regulates intracellular levels of LCBs, sphingolipid precursors that are growth inhibitory at increased levels. The sequence is that of Sphingoid long-chain base transporter RSB1 (RSB1) from Saccharomyces cerevisiae (strain Lalvin EC1118 / Prise de mousse) (Baker's yeast).